A 356-amino-acid chain; its full sequence is TPR repeat-containing protein P27G11.02 (356 aa).

Residues 1–20 (MRMQWIWKSRRSLQNVFIRR) constitute a mitochondrion transit peptide. TPR repeat units lie at residues 194-227 (SRLF…TMAN) and 290-323 (AAAF…RKDD).

The protein localises to the mitochondrion. This Schizosaccharomyces pombe (strain 972 / ATCC 24843) (Fission yeast) protein is TPR repeat-containing protein P27G11.02.